Reading from the N-terminus, the 322-residue chain is Glycerol-3-phosphate dehydrogenase [NAD(P)+] (322 aa).

3 residues coordinate NADPH: W13, H33, and K99. 3 residues coordinate sn-glycerol 3-phosphate: K99, G127, and S129. An NADPH-binding site is contributed by A131. Sn-glycerol 3-phosphate is bound by residues K182, D235, S245, R246, and N247. K182 functions as the Proton acceptor in the catalytic mechanism. R246 is an NADPH binding site. E272 is an NADPH binding site.

The protein belongs to the NAD-dependent glycerol-3-phosphate dehydrogenase family.

It localises to the cytoplasm. It carries out the reaction sn-glycerol 3-phosphate + NAD(+) = dihydroxyacetone phosphate + NADH + H(+). It catalyses the reaction sn-glycerol 3-phosphate + NADP(+) = dihydroxyacetone phosphate + NADPH + H(+). Its pathway is membrane lipid metabolism; glycerophospholipid metabolism. Its function is as follows. Catalyzes the reduction of the glycolytic intermediate dihydroxyacetone phosphate (DHAP) to sn-glycerol 3-phosphate (G3P), the key precursor for phospholipid synthesis. The polypeptide is Glycerol-3-phosphate dehydrogenase [NAD(P)+] (Ruthia magnifica subsp. Calyptogena magnifica).